The following is a 76-amino-acid chain: Exodeoxyribonuclease 7 small subunit (76 aa).

This sequence belongs to the XseB family. In terms of assembly, heterooligomer composed of large and small subunits.

The protein localises to the cytoplasm. The catalysed reaction is Exonucleolytic cleavage in either 5'- to 3'- or 3'- to 5'-direction to yield nucleoside 5'-phosphates.. Its function is as follows. Bidirectionally degrades single-stranded DNA into large acid-insoluble oligonucleotides, which are then degraded further into small acid-soluble oligonucleotides. In Staphylococcus aureus (strain Mu3 / ATCC 700698), this protein is Exodeoxyribonuclease 7 small subunit.